The chain runs to 787 residues: MQNKVLRGILFKNVPLGYSYNRSIRHPTFGNSIIRWASTQVKTSSDVLQRSFDDHLYWTEINKQNYSSKEGWGSITKRLKGNKLTTNRSGLFNNEYLTSPEGLKLFSQVSLEKSQKIVDKLRSDRTPEGLRLYVQNLDLLSDTLCRVIDLCEFIRSSHPDYKFVEAAQDCYEEMFEFMNMLNTDVNLCFTLKHVLENKEIASKLSEEELRVGRILLEDFEKSGIYMKPEVREQFITLSQSISVIGQEFISNTDFVKDNNVVVSCNQLDSLGIDPELLSQIEKDIAGKNYKIPTYGYIPFALLKSCPSEEIREKIWVAVHNCSNEQIKRLTDLVKLRAVLSQLLGKKSYAEYQLEGKMAKNPKEVIEFIKTLMDFTKPMAAKELDGIAEKKLTIKSNGSNLSVCDILKTVRPWDRDYYSAIEREQTSAKNLYGSEEVLKYFTLGNVMQGLSNLFQKIYGIKLELDVPKIGETWSPEVRKINVISEDEGLIGIIYCDLFERSGKTSNAAHFTICCSRDISPYETEDSTTQIAIDSKGTRFQLPIISLVCNFSKTMISETDSVCFLHLPEVETLFHEMGHAMHSMLGRTKLQNISGTRCATDFVELPSILMEYFARDPRVLETIGKHYLTKETVKREMLEPHLQDLKYLQHCETYSQAKMAMLDQTLHGETISSHLDHLDVVKLYQDLERQLGVLVDDKSNWCGKFGHLFGYSAVYYSYLFDRAIASKIWGALFERNPFSRASGDKYRNSVLQWGGSRDPWHCIASALDKPELAKGDDEAIKYIGSTNQL.

A mitochondrion-targeting transit peptide spans 1–36 (MQNKVLRGILFKNVPLGYSYNRSIRHPTFGNSIIRW). Position 573 (His573) interacts with Zn(2+). Glu574 is a catalytic residue. Positions 577 and 580 each coordinate Zn(2+).

Belongs to the peptidase M3 family. Requires Zn(2+) as cofactor.

It localises to the mitochondrion matrix. It carries out the reaction Release of an N-terminal octapeptide as second stage of processing of some proteins imported into the mitochondrion.. In terms of biological role, cleaves proteins, imported into the mitochondrion, to their mature size. While most mitochondrial precursor proteins are processed to the mature form in one step by mitochondrial processing peptidase (MPP), the sequential cleavage by MIP of an octapeptide after initial processing by MPP is a required step for a subgroup of nuclear-encoded precursor proteins destined for the matrix or the inner membrane. This is Mitochondrial intermediate peptidase (OCT1) from Vanderwaltozyma polyspora (strain ATCC 22028 / DSM 70294 / BCRC 21397 / CBS 2163 / NBRC 10782 / NRRL Y-8283 / UCD 57-17) (Kluyveromyces polysporus).